A 358-amino-acid chain; its full sequence is Peptide chain release factor 1 (358 aa).

Q233 carries the post-translational modification N5-methylglutamine.

Belongs to the prokaryotic/mitochondrial release factor family. Post-translationally, methylated by PrmC. Methylation increases the termination efficiency of RF1.

The protein localises to the cytoplasm. Its function is as follows. Peptide chain release factor 1 directs the termination of translation in response to the peptide chain termination codons UAG and UAA. The chain is Peptide chain release factor 1 from Geobacillus sp. (strain WCH70).